The following is a 432-amino-acid chain: Trigger factor (432 aa).

The 86-residue stretch at 161–246 folds into the PPIase FKBP-type domain; the sequence is EDRVTIDFTG…LKKVEERELP (86 aa).

Belongs to the FKBP-type PPIase family. Tig subfamily. Homodimer and monomer. In vivo most of the ribosomes are in complex with monomeric TF. Uncomplexed TF, however, is in a monomer-dimer equilibrium with approximately two thirds of TF existing in a dimeric state.

Its subcellular location is the cytoplasm. The enzyme catalyses [protein]-peptidylproline (omega=180) = [protein]-peptidylproline (omega=0). In terms of biological role, involved in protein export. Acts as a chaperone by maintaining the newly synthesized protein in an open conformation. Functions as a peptidyl-prolyl cis-trans isomerase. This chain is Trigger factor, found in Shigella boydii serotype 18 (strain CDC 3083-94 / BS512).